Consider the following 364-residue polypeptide: Putative protein C31H2.4 (364 aa).

VOC domains are found at residues 6–134 (AIHH…LGEF) and 161–320 (LMDH…IFSK). 3 residues coordinate Fe cation: His-164, His-248, and Glu-331.

Belongs to the 4HPPD family. It depends on Fe cation as a cofactor.

The protein is Putative protein C31H2.4 of Caenorhabditis elegans.